An 86-amino-acid chain; its full sequence is Conotoxin S6.10 (86 aa).

The first 22 residues, Met1 to Ala22, serve as a signal peptide directing secretion. Residues Lys23–Thr45 constitute a propeptide that is removed on maturation. Intrachain disulfides connect Cys48–Cys62, Cys55–Cys66, and Cys61–Cys73.

It belongs to the conotoxin O1 superfamily. In terms of tissue distribution, expressed by the venom duct.

The protein resides in the secreted. The protein is Conotoxin S6.10 of Conus striatus (Striated cone).